Here is a 670-residue protein sequence, read N- to C-terminus: DNA ligase (670 aa).

NAD(+) contacts are provided by residues 35–39, 84–85, and E116; these read DSVYD and SL. The active-site N6-AMP-lysine intermediate is the K118. The NAD(+) site is built by R139, E176, K293, and K317. Zn(2+)-binding residues include C411, C414, C429, and C435. Positions 592–670 constitute a BRCT domain; that stretch reads VVKSEIAGKT…EEAFLKLLKS (79 aa).

This sequence belongs to the NAD-dependent DNA ligase family. LigA subfamily. Mg(2+) serves as cofactor. Mn(2+) is required as a cofactor.

The catalysed reaction is NAD(+) + (deoxyribonucleotide)n-3'-hydroxyl + 5'-phospho-(deoxyribonucleotide)m = (deoxyribonucleotide)n+m + AMP + beta-nicotinamide D-nucleotide.. In terms of biological role, DNA ligase that catalyzes the formation of phosphodiester linkages between 5'-phosphoryl and 3'-hydroxyl groups in double-stranded DNA using NAD as a coenzyme and as the energy source for the reaction. It is essential for DNA replication and repair of damaged DNA. The sequence is that of DNA ligase from Coxiella burnetii (strain RSA 331 / Henzerling II).